Consider the following 706-residue polypeptide: Polyribonucleotide nucleotidyltransferase (706 aa).

Mg(2+) contacts are provided by D487 and D493. Residues 553 to 612 (PRLFTMKINQDKIREVIGKGGETIRAITAETGTEINIAEDGTITIAATTQEAGDAAKKRI) form the KH domain. Residues 622–692 (GKVYEGTVVK…DRGRVRLSIK (71 aa)) form the S1 motif domain.

This sequence belongs to the polyribonucleotide nucleotidyltransferase family. Mg(2+) serves as cofactor.

The protein localises to the cytoplasm. It catalyses the reaction RNA(n+1) + phosphate = RNA(n) + a ribonucleoside 5'-diphosphate. Involved in mRNA degradation. Catalyzes the phosphorolysis of single-stranded polyribonucleotides processively in the 3'- to 5'-direction. This Neisseria meningitidis serogroup A / serotype 4A (strain DSM 15465 / Z2491) protein is Polyribonucleotide nucleotidyltransferase.